A 422-amino-acid polypeptide reads, in one-letter code: Testin (422 aa).

Positions 92 to 199 (MILTNPVPAK…GDVKLPGELE (108 aa)) constitute a PET domain. The tract at residues 198–224 (LETKATDKNNVNSGDRSTSAAVGAMED) is disordered. Residues 205–217 (KNNVNSGDRSTSA) are compositionally biased toward polar residues. LIM zinc-binding domains are found at residues 234–297 (YSCY…CDSE), 299–359 (PRCA…KHAA), and 362–422 (QGCH…KMMS).

It belongs to the prickle / espinas / testin family.

The protein localises to the cytoplasm. Its subcellular location is the cell junction. It is found in the focal adhesion. Functionally, scaffold protein that may play a role in cell adhesion, cell spreading and in the reorganization of the actin cytoskeleton. May play a role in the regulation of cell proliferation. May inhibit cell growth. The chain is Testin (TES) from Gallus gallus (Chicken).